Here is a 313-residue protein sequence, read N- to C-terminus: Porphobilinogen deaminase (313 aa).

S-(dipyrrolylmethanemethyl)cysteine is present on cysteine 242.

Belongs to the HMBS family. In terms of assembly, monomer. The cofactor is dipyrromethane.

It carries out the reaction 4 porphobilinogen + H2O = hydroxymethylbilane + 4 NH4(+). It functions in the pathway porphyrin-containing compound metabolism; protoporphyrin-IX biosynthesis; coproporphyrinogen-III from 5-aminolevulinate: step 2/4. In terms of biological role, tetrapolymerization of the monopyrrole PBG into the hydroxymethylbilane pre-uroporphyrinogen in several discrete steps. In Escherichia coli O45:K1 (strain S88 / ExPEC), this protein is Porphobilinogen deaminase.